Consider the following 148-residue polypeptide: Large ribosomal subunit protein bL9 (148 aa).

The protein belongs to the bacterial ribosomal protein bL9 family.

In terms of biological role, binds to the 23S rRNA. In Streptomyces griseus subsp. griseus (strain JCM 4626 / CBS 651.72 / NBRC 13350 / KCC S-0626 / ISP 5235), this protein is Large ribosomal subunit protein bL9.